A 275-amino-acid polypeptide reads, in one-letter code: 3-methyl-2-oxobutanoate hydroxymethyltransferase (275 aa).

Residues aspartate 49 and aspartate 88 each coordinate Mg(2+). 3-methyl-2-oxobutanoate is bound by residues 49–50 (DS), aspartate 88, and lysine 118. Glutamate 120 serves as a coordination point for Mg(2+). The active-site Proton acceptor is the glutamate 187.

The protein belongs to the PanB family. As to quaternary structure, homodecamer; pentamer of dimers. The cofactor is Mg(2+).

It is found in the cytoplasm. The catalysed reaction is 3-methyl-2-oxobutanoate + (6R)-5,10-methylene-5,6,7,8-tetrahydrofolate + H2O = 2-dehydropantoate + (6S)-5,6,7,8-tetrahydrofolate. It participates in cofactor biosynthesis; (R)-pantothenate biosynthesis; (R)-pantoate from 3-methyl-2-oxobutanoate: step 1/2. Functionally, catalyzes the reversible reaction in which hydroxymethyl group from 5,10-methylenetetrahydrofolate is transferred onto alpha-ketoisovalerate to form ketopantoate. In Bartonella quintana (strain Toulouse) (Rochalimaea quintana), this protein is 3-methyl-2-oxobutanoate hydroxymethyltransferase.